The sequence spans 411 residues: Argininosuccinate lyase (411 aa).

It belongs to the lyase 1 family. Argininosuccinate lyase subfamily.

The protein localises to the cytoplasm. The enzyme catalyses 2-(N(omega)-L-arginino)succinate = fumarate + L-arginine. It participates in amino-acid biosynthesis; L-arginine biosynthesis; L-arginine from L-ornithine and carbamoyl phosphate: step 3/3. This chain is Argininosuccinate lyase, found in Legionella pneumophila (strain Lens).